A 464-amino-acid polypeptide reads, in one-letter code: Soluble pyridine nucleotide transhydrogenase (464 aa).

Residue 35–44 (DSRRQVGGNC) coordinates FAD.

This sequence belongs to the class-I pyridine nucleotide-disulfide oxidoreductase family. FAD is required as a cofactor.

The protein resides in the cytoplasm. The catalysed reaction is NAD(+) + NADPH = NADH + NADP(+). Conversion of NADPH, generated by peripheral catabolic pathways, to NADH, which can enter the respiratory chain for energy generation. This is Soluble pyridine nucleotide transhydrogenase from Pseudomonas fluorescens (strain ATCC BAA-477 / NRRL B-23932 / Pf-5).